Consider the following 181-residue polypeptide: Probable nicotinate-nucleotide adenylyltransferase (181 aa).

The protein belongs to the NadD family.

It carries out the reaction nicotinate beta-D-ribonucleotide + ATP + H(+) = deamido-NAD(+) + diphosphate. It functions in the pathway cofactor biosynthesis; NAD(+) biosynthesis; deamido-NAD(+) from nicotinate D-ribonucleotide: step 1/1. In terms of biological role, catalyzes the reversible adenylation of nicotinate mononucleotide (NaMN) to nicotinic acid adenine dinucleotide (NaAD). The sequence is that of Probable nicotinate-nucleotide adenylyltransferase from Campylobacter fetus subsp. fetus (strain 82-40).